The sequence spans 322 residues: Probable uridine nucleosidase 2 (322 aa).

Active-site residues include Asp-14 and His-246.

Belongs to the IUNH family. In terms of assembly, component of the NSH heterocomplex made of URH1/NSH1 and URH2/NSH2 which exhibits strong xanthosine nucleosidase activity. Interacts with URH1. Expressed in roots, seedlings and flowers.

It is found in the cytoplasm. The protein resides in the cytosol. It carries out the reaction uridine + H2O = D-ribose + uracil. The enzyme catalyses inosine + H2O = hypoxanthine + D-ribose. It catalyses the reaction xanthosine + H2O = D-ribose + xanthine. Functionally, involved in pyrimidine breakdown, especially in response to dark stress. In the presence of URH1, exhibits efficient inosine and xanthosine hydrolytic activities. Support inosine breakdown especially during the late phase of senescence. The chain is Probable uridine nucleosidase 2 from Arabidopsis thaliana (Mouse-ear cress).